The sequence spans 186 residues: MTNTFLLAAEKLPMEESVNPLIPPLYDIVWSIIPFAVILFVFWKFVLPKFQEVLNQREDQIEGGIRRAESAQAEAKAALEKYNAQLAEARTEAAQIRDDARSQGQKIIADMKAQATEESNRIVESGHKQLEAQRSAVVTDLRKEMGENSINLAERLLGEQLSDDVKRSGTIDNFLAGLDNVGASGK.

The helical transmembrane segment at 28–48 threads the bilayer; the sequence is IVWSIIPFAVILFVFWKFVLP.

This sequence belongs to the ATPase B chain family. In terms of assembly, F-type ATPases have 2 components, F(1) - the catalytic core - and F(0) - the membrane proton channel. F(1) has five subunits: alpha(3), beta(3), gamma(1), delta(1), epsilon(1). F(0) has three main subunits: a(1), b(2) and c(10-14). The alpha and beta chains form an alternating ring which encloses part of the gamma chain. F(1) is attached to F(0) by a central stalk formed by the gamma and epsilon chains, while a peripheral stalk is formed by the delta and b chains.

It localises to the cell membrane. F(1)F(0) ATP synthase produces ATP from ADP in the presence of a proton or sodium gradient. F-type ATPases consist of two structural domains, F(1) containing the extramembraneous catalytic core and F(0) containing the membrane proton channel, linked together by a central stalk and a peripheral stalk. During catalysis, ATP synthesis in the catalytic domain of F(1) is coupled via a rotary mechanism of the central stalk subunits to proton translocation. In terms of biological role, component of the F(0) channel, it forms part of the peripheral stalk, linking F(1) to F(0). The polypeptide is ATP synthase subunit b (Corynebacterium jeikeium (strain K411)).